The primary structure comprises 583 residues: Complement factor I (583 aa).

An N-terminal signal peptide occupies residues 1 to 18 (MKLLHVFLLFLCFHLSFC). Intrachain disulfides connect cysteine 33-cysteine 255, cysteine 43-cysteine 54, cysteine 48-cysteine 59, cysteine 61-cysteine 93, cysteine 67-cysteine 86, cysteine 75-cysteine 106, cysteine 141-cysteine 181, cysteine 154-cysteine 214, cysteine 186-cysteine 196, cysteine 229-cysteine 247, cysteine 259-cysteine 271, cysteine 266-cysteine 284, cysteine 278-cysteine 293, cysteine 327-cysteine 453, cysteine 365-cysteine 381, and cysteine 373-cysteine 444. The Kazal-like domain occupies 55 to 108 (IEGTCICKLPYQCPKNGTTVCATNGRSFPTYCQQKSLECLRPGTKFLNNGTCTA). N-linked (GlcNAc...) asparagine glycans are attached at residues asparagine 70, asparagine 103, asparagine 173, and asparagine 177. Residues 114 to 212 (VSLKHGNTDS…TMGYQDLADV (99 aa)) enclose the SRCR domain. 2 consecutive LDL-receptor class A domains span residues 213–257 (VCYT…LCCK) and 258–294 (ACQG…VGCE). Residues lysine 239, aspartate 242, isoleucine 244, aspartate 246, aspartate 252, and glutamate 253 each coordinate Ca(2+). Residues tyrosine 276, asparagine 279, glutamate 281, aspartate 283, aspartate 289, and glutamate 290 each coordinate Ca(2+). One can recognise a Peptidase S1 domain in the interval 340 to 574 (IVGGKRAQLG…YFDWISYHVG (235 aa)). Residues histidine 380 and aspartate 429 each act as charge relay system in the active site. Asparagine 464 and asparagine 494 each carry an N-linked (GlcNAc...) asparagine glycan. 3 cysteine pairs are disulfide-bonded: cysteine 467–cysteine 531, cysteine 495–cysteine 510, and cysteine 521–cysteine 550. The active-site Charge relay system is serine 525. Asparagine 536 is a glycosylation site (N-linked (GlcNAc...) asparagine).

This sequence belongs to the peptidase S1 family. In terms of assembly, heterodimer of a light and heavy chains; disulfide-linked. The fully processed and mature protein circulates as a zymogen, and is allosterically activated by substrate-induced remodeling of the active site. In terms of tissue distribution, plasma.

It localises to the secreted. It is found in the extracellular space. It carries out the reaction Inactivates complement subcomponents C3b, iC3b and C4b by proteolytic cleavage.. Functionally, responsible for cleaving the alpha-chains of C4b and C3b in the presence of the cofactors C4-binding protein and factor H respectively. In Pongo abelii (Sumatran orangutan), this protein is Complement factor I (CFI).